The primary structure comprises 469 residues: Bile acid receptor (469 aa).

A Glycyl lysine isopeptide (Lys-Gly) (interchain with G-Cter in SUMO1) cross-link involves residue lysine 119. Residues 121 to 196 (DELCVVCGDR…MGMLAECLLT (76 aa)) constitute a DNA-binding region (nuclear receptor). The NR C4-type zinc finger occupies 124–144 (CVVCGDRASGYHYNALTCEGC). Phosphoserine; by PKC/PRKCA occurs at positions 132 and 151. Lysine 154 is subject to N6-acetyllysine; by EP300. Residues 160 to 184 (CKNGGNCVMDMYMRRKCQDCRLRKC) form an NR C4-type zinc finger. Lysine 203 is modified (N6-methyllysine; by SETD7). The residue at position 210 (lysine 210) is an N6-acetyllysine; by EP300. One can recognise an NR LBD domain in the interval 245-469 (DQQTLLDYIM…PLLCEIWDVQ (225 aa)). Residue lysine 272 forms a Glycyl lysine isopeptide (Lys-Gly) (interchain with G-Cter in SUMO1) linkage. A 3beta,7beta-dihydroxy-5beta-cholan-24-oate-binding site is contributed by arginine 328. Chenodeoxycholate-binding residues include arginine 328, tyrosine 358, and tyrosine 366. Tyrosine 366 provides a ligand contact to 3beta,7beta-dihydroxy-5beta-cholan-24-oate. Phosphothreonine; by PKC/PRKCZ is present on threonine 439. Residue histidine 444 coordinates chenodeoxycholate.

It belongs to the nuclear hormone receptor family. NR1 subfamily. In terms of assembly, heterodimer with RXRA; the heterodimerization enhances the binding affinity for LXXLL motifs from coactivators. Binds DNA predominantly as a heterodimer with RXRA. After activation by agonist binding interacts with coactivators. Interacts with NCOA1, NCOA2, PPARGC1A, CARM1, SETD7, PRMT1, GPS2, SMARCA4 and MED1, EP300 and SMARCD1. Interacts with XRCC5 and XRCC6; decreasing NR1H4/FXR transactivation activity towards ABCB11/BSEP. Interacts with PAGR1 AND NCOA6; indicative for an association with an MLL2/MLL3 complex (ASCOM). Acetylated by EP300. Lys-210 as is the major acetylation site for EP300; the dynamicly regulated acetylation inhibits heterodimerization with RXRA and transactivation activity. Deacetylated by SIRT1. In terms of processing, methylation may increase transactivation of target genes. Post-translationally, phosphorylation by PKC/PRKCA increases transactivation activity by promoting association with PPARGC1A. Sumoylated upon ligand binding.

The protein localises to the nucleus. Its function is as follows. Ligand-activated transcription factor. Receptor for bile acids (BAs) such as chenodeoxycholic acid (CDCA), lithocholic acid, deoxycholic acid (DCA) and allocholic acid (ACA). Plays a essential role in BA homeostasis through the regulation of genes involved in BA synthesis, conjugation and enterohepatic circulation. Also regulates lipid and glucose homeostasis and is involved innate immune response. The FXR-RXR heterodimer binds predominantly to farnesoid X receptor response elements (FXREs) containing two inverted repeats of the consensus sequence 5'-AGGTCA-3' in which the monomers are spaced by 1 nucleotide (IR-1) but also to tandem repeat DR1 sites with lower affinity, and can be activated by either FXR or RXR-specific ligands. It is proposed that monomeric nuclear receptors such as NR5A2/LRH-1 bound to coregulatory nuclear responsive element (NRE) halfsites located in close proximity to FXREs modulate transcriptional activity. In the liver activates transcription of the corepressor NR0B2 thereby indirectly inhibiting CYP7A1 and CYP8B1 (involved in BA synthesis) implicating at least in part histone demethylase KDM1A resulting in epigenomic repression, and SLC10A1/NTCP (involved in hepatic uptake of conjugated BAs). Activates transcription of the repressor MAFG (involved in regulation of BA synthesis). Activates transcription of SLC27A5/BACS and BAAT (involved in BA conjugation), ABCB11/BSEP (involved in bile salt export) by directly recruiting histone methyltransferase CARM1, and ABCC2/MRP2 (involved in secretion of conjugated BAs) and ABCB4 (involved in secretion of phosphatidylcholine in the small intestine). Activates transcription of SLC27A5/BACS and BAAT (involved in BA conjugation), ABCB11/BSEP (involved in bile salt export) by directly recruiting histone methyltransferase CARM1, and ABCC2/MRP2 (involved in secretion of conjugated BAs) and ABCB4 (involved in secretion of phosphatidylcholine in the small intestine). In the intestine activates FGF19 expression and secretion leading to hepatic CYP7A1 repression. The function also involves the coordinated induction of hepatic KLB/beta-klotho expression. Regulates transcription of liver UGT2B4 and SULT2A1 involved in BA detoxification; binding to the UGT2B4 promoter seems to imply a monomeric transactivation independent of RXRA. Modulates lipid homeostasis by activating liver NR0B2/SHP-mediated repression of SREBF1 (involved in de novo lipogenesis), expression of PLTP (involved in HDL formation), SCARB1 (involved in HDL hepatic uptake), APOE, APOC1, APOC4, PPARA (involved in beta-oxidation of fatty acids), VLDLR and SDC1 (involved in the hepatic uptake of LDL and IDL remnants), and inhibiting expression of MTTP (involved in VLDL assembly). Increases expression of APOC2 (promoting lipoprotein lipase activity implicated in triglyceride clearance). Transrepresses APOA1 involving a monomeric competition with NR2A1 for binding to a DR1 element. Also reduces triglyceride clearance by inhibiting expression of ANGPTL3 and APOC3 (both involved in inhibition of lipoprotein lipase). Involved in glucose homeostasis by modulating hepatic gluconeogenesis through activation of NR0B2/SHP-mediated repression of respective genes. Modulates glycogen synthesis (inducing phosphorylation of glycogen synthase kinase-3). Modulates glucose-stimulated insulin secretion and is involved in insulin resistance. Involved in intestinal innate immunity. Plays a role in protecting the distal small intestine against bacterial overgrowth and preservation of the epithelial barrier. Down-regulates inflammatory cytokine expression in several types of immune cells including macrophages and mononuclear cells. Mediates trans-repression of TLR4-induced cytokine expression; the function seems to require its sumoylation and prevents N-CoR nuclear receptor corepressor clearance from target genes such as IL1B and NOS2. Involved in the TLR9-mediated protective mechanism in intestinal inflammation. Plays an anti-inflammatory role in liver inflammation; proposed to inhibit pro-inflammatory (but not antiapoptotic) NF-kappa-B signaling. The sequence is that of Bile acid receptor (Nr1h4) from Rattus norvegicus (Rat).